The primary structure comprises 70 residues: Translation initiation factor IF-1 (70 aa).

The S1-like domain maps to 1–70 (MKNDKLFLTG…LKLGRITQRK (70 aa)).

The protein belongs to the IF-1 family. As to quaternary structure, component of the 30S ribosomal translation pre-initiation complex which assembles on the 30S ribosome in the order IF-2 and IF-3, IF-1 and N-formylmethionyl-tRNA(fMet); mRNA recruitment can occur at any time during PIC assembly.

It is found in the cytoplasm. One of the essential components for the initiation of protein synthesis. Stabilizes the binding of IF-2 and IF-3 on the 30S subunit to which N-formylmethionyl-tRNA(fMet) subsequently binds. Helps modulate mRNA selection, yielding the 30S pre-initiation complex (PIC). Upon addition of the 50S ribosomal subunit IF-1, IF-2 and IF-3 are released leaving the mature 70S translation initiation complex. This is Translation initiation factor IF-1 from Mycoplasma genitalium (strain ATCC 33530 / DSM 19775 / NCTC 10195 / G37) (Mycoplasmoides genitalium).